Consider the following 106-residue polypeptide: Large ribosomal subunit protein cL38 (106 aa).

A chloroplast-targeting transit peptide spans 1-39; it reads MSVSAIFGTGIVTVAASPVLRQFQVPKLGNGGGLGMVIE. The interval 42 to 70 is disordered; the sequence is SRPQKKSTAHHRKTRPKKTQPWDIKRKPT. Positions 44 to 59 are enriched in basic residues; sequence PQKKSTAHHRKTRPKK.

Belongs to the chloroplast-specific ribosomal protein cL38 family. In terms of assembly, part of the 50S ribosomal subunit.

The protein resides in the plastid. It is found in the chloroplast. In Arabidopsis thaliana (Mouse-ear cress), this protein is Large ribosomal subunit protein cL38 (PSRP6).